A 527-amino-acid chain; its full sequence is ADP-ribosylation factor-like protein 13B (527 aa).

GTP-binding positions include 26 to 33, 69 to 73, and 128 to 131; these read GLDNAGKT, DLGGG, and NKQD. The segment covering 200–248 has biased composition (basic and acidic residues); that stretch reads EEVRQEEARKKKEREERLRKQREERLRQQKEEEERAREVEKENELHDGK. 2 disordered regions span residues 200 to 252 and 300 to 503; these read EEVR…APSL and GLPH…FSLV. The span at 381-444 shows a compositional bias: low complexity; it reads QPSDAGVGSS…GSVFAPRPAS (64 aa). A compositionally biased stretch (gly residues) spans 445 to 457; the sequence is AGGGGPGSRGSGS.

It belongs to the small GTPase superfamily. Arf family. In terms of assembly, monomer.

It localises to the cell projection. It is found in the cilium membrane. Cilium-specific protein required to control the microtubule-based, ciliary axoneme structure. May act by maintaining the association between IFT subcomplexes A and B. The sequence is that of ADP-ribosylation factor-like protein 13B (ARL13) from Chlamydomonas reinhardtii (Chlamydomonas smithii).